The sequence spans 215 residues: Ribosomal RNA small subunit methyltransferase G (215 aa).

Residues Gly-77, Phe-82, 130–131, and Arg-146 contribute to the S-adenosyl-L-methionine site; that span reads IE.

This sequence belongs to the methyltransferase superfamily. RNA methyltransferase RsmG family.

Its subcellular location is the cytoplasm. The enzyme catalyses guanosine(527) in 16S rRNA + S-adenosyl-L-methionine = N(7)-methylguanosine(527) in 16S rRNA + S-adenosyl-L-homocysteine. In terms of biological role, specifically methylates the N7 position of guanine in position 527 of 16S rRNA. The polypeptide is Ribosomal RNA small subunit methyltransferase G (Bartonella bacilliformis (strain ATCC 35685 / KC583 / Herrer 020/F12,63)).